We begin with the raw amino-acid sequence, 179 residues long: MTDLVAVWDVALSDGVHKIEFEHGTTSGKRVVYVDGKEEIRREWMFKLVGKETFFVGAAKTKATINIDAISGFAYEYTLEIDGKSLKKYMENRSKTTSTWVLRLDGEDLRVVLEKDTMDVWCNGQKMETAGEFVDDGTETHFSVGNHGCYIKAVSSGKRKEGIIHTLIVDNREIPELTQ.

Position 2 is an N-acetylthreonine (Thr2).

Belongs to the FAIM1 family. As to expression, widely expressed, with the highest levels in brain, thymus, kidney, and spleen.

It is found in the cytoplasm. Plays a role as an inducible effector molecule that mediates Fas resistance produced by surface Ig engagement in B cells. The polypeptide is Fas apoptotic inhibitory molecule 1 (Faim) (Mus musculus (Mouse)).